We begin with the raw amino-acid sequence, 417 residues long: BSD domain-containing protein 1-B (417 aa).

Residues 153 to 205 enclose the BSD domain; the sequence is WLAYWDPEQRKAEISEPLVTSPSIRALFTKMVPAAVSHSEFWQRYFYKVHQLE. Disordered regions lie at residues 215–234, 262–292, and 323–390; these read KQRA…EEEE, HVED…SISP, and AAET…DFDM. A compositionally biased stretch (basic and acidic residues) spans 262-278; it reads HVEDKSEKTAELNRDHT. A compositionally biased stretch (low complexity) spans 281–292; sequence TSPSESSESISP. A compositionally biased stretch (polar residues) spans 332–343; sequence PVEQTGKSNAQM. The span at 345–356 shows a compositional bias: basic and acidic residues; the sequence is THREDPPSDLRV. A compositionally biased stretch (polar residues) spans 360-379; the sequence is NSDSGKSTPSNNGQKGSSTD. Acidic residues predominate over residues 380 to 390; sequence VSEDWEKDFDM.

This chain is BSD domain-containing protein 1-B (bsdc1-b), found in Xenopus laevis (African clawed frog).